The primary structure comprises 515 residues: 1-pyrroline-5-carboxylate dehydrogenase 2 (515 aa).

Catalysis depends on residues Glu286 and Cys320.

Belongs to the aldehyde dehydrogenase family. RocA subfamily.

It catalyses the reaction L-glutamate 5-semialdehyde + NAD(+) + H2O = L-glutamate + NADH + 2 H(+). It functions in the pathway amino-acid degradation; L-proline degradation into L-glutamate; L-glutamate from L-proline: step 2/2. Important for the use of proline as a sole carbon and energy source or a sole nitrogen source. The protein is 1-pyrroline-5-carboxylate dehydrogenase 2 of Bacillus subtilis (strain 168).